Reading from the N-terminus, the 256-residue chain is Hydroxyacylglutathione hydrolase (256 aa).

7 residues coordinate Zn(2+): histidine 57, histidine 59, aspartate 61, histidine 62, histidine 115, aspartate 134, and histidine 172.

The protein belongs to the metallo-beta-lactamase superfamily. Glyoxalase II family. Monomer. Zn(2+) serves as cofactor.

The enzyme catalyses an S-(2-hydroxyacyl)glutathione + H2O = a 2-hydroxy carboxylate + glutathione + H(+). It functions in the pathway secondary metabolite metabolism; methylglyoxal degradation; (R)-lactate from methylglyoxal: step 2/2. Thiolesterase that catalyzes the hydrolysis of S-D-lactoyl-glutathione to form glutathione and D-lactic acid. This chain is Hydroxyacylglutathione hydrolase, found in Rhodospirillum rubrum (strain ATCC 11170 / ATH 1.1.1 / DSM 467 / LMG 4362 / NCIMB 8255 / S1).